Here is a 196-residue protein sequence, read N- to C-terminus: Thymidine kinase (196 aa).

17–24 (GPMFAGKT) is an ATP binding site. Glutamate 92 acts as the Proton acceptor in catalysis. Phenylalanine 121 serves as a coordination point for substrate. Zn(2+) is bound by residues cysteine 146 and cysteine 149. A substrate-binding site is contributed by 166–170 (LILAG). Zn(2+) is bound by residues cysteine 179 and cysteine 182.

The protein belongs to the thymidine kinase family.

It catalyses the reaction thymidine + ATP = dTMP + ADP + H(+). Functionally, phosphorylates thymidine. ASFV replicates in the cytoplasm of infected cells and contains genes encoding a number of enzymes needed for DNA synthesis, including thymidine kinase. Important for growth in swine macrophages in vitro and is a virus virulence factor in swine. The chain is Thymidine kinase from African swine fever virus (strain Badajoz 1971 Vero-adapted) (Ba71V).